We begin with the raw amino-acid sequence, 167 residues long: NAD(P)H-quinone oxidoreductase subunit I, chloroplastic (167 aa).

4Fe-4S ferredoxin-type domains follow at residues G55–K84 and L95–E124. [4Fe-4S] cluster contacts are provided by C64, C67, C70, C74, C104, C107, C110, and C114.

Belongs to the complex I 23 kDa subunit family. In terms of assembly, NDH is composed of at least 16 different subunits, 5 of which are encoded in the nucleus. [4Fe-4S] cluster is required as a cofactor.

It is found in the plastid. It localises to the chloroplast thylakoid membrane. It carries out the reaction a plastoquinone + NADH + (n+1) H(+)(in) = a plastoquinol + NAD(+) + n H(+)(out). The enzyme catalyses a plastoquinone + NADPH + (n+1) H(+)(in) = a plastoquinol + NADP(+) + n H(+)(out). NDH shuttles electrons from NAD(P)H:plastoquinone, via FMN and iron-sulfur (Fe-S) centers, to quinones in the photosynthetic chain and possibly in a chloroplast respiratory chain. The immediate electron acceptor for the enzyme in this species is believed to be plastoquinone. Couples the redox reaction to proton translocation, and thus conserves the redox energy in a proton gradient. The chain is NAD(P)H-quinone oxidoreductase subunit I, chloroplastic from Lobularia maritima (Sweet alyssum).